The primary structure comprises 79 residues: D-alanyl carrier protein (79 aa).

Positions 1–77 (MDTKQAVLDI…KIIAKVESLR (77 aa)) constitute a Carrier domain. An O-(pantetheine 4'-phosphoryl)serine modification is found at serine 35.

The protein belongs to the DltC family. 4'-phosphopantetheine is transferred from CoA to a specific serine of apo-DCP.

It localises to the cytoplasm. The protein operates within cell wall biogenesis; lipoteichoic acid biosynthesis. In terms of biological role, carrier protein involved in the D-alanylation of lipoteichoic acid (LTA). The loading of thioester-linked D-alanine onto DltC is catalyzed by D-alanine--D-alanyl carrier protein ligase DltA. The DltC-carried D-alanyl group is further transferred to cell membrane phosphatidylglycerol (PG) by forming an ester bond, probably catalyzed by DltD. D-alanylation of LTA plays an important role in modulating the properties of the cell wall in Gram-positive bacteria, influencing the net charge of the cell wall. The sequence is that of D-alanyl carrier protein from Lactobacillus johnsonii (strain CNCM I-12250 / La1 / NCC 533).